A 487-amino-acid polypeptide reads, in one-letter code: Ribosomal protein uS12 methylthiotransferase RimO (487 aa).

The MTTase N-terminal domain maps to 38-149; that stretch reads PTVAFAHLGC…IVEVLEQVEA (112 aa). 6 residues coordinate [4Fe-4S] cluster: Cys-47, Cys-83, Cys-112, Cys-187, Cys-191, and Cys-194. One can recognise a Radical SAM core domain in the interval 173 to 402; sequence TTSEAVAYLK…MEAQQAISAE (230 aa). Residues 405 to 476 form the TRAM domain; the sequence is GAWVGRIVDV…IYDLEGEVVG (72 aa).

The protein belongs to the methylthiotransferase family. RimO subfamily. The cofactor is [4Fe-4S] cluster.

Its subcellular location is the cytoplasm. It catalyses the reaction L-aspartate(89)-[ribosomal protein uS12]-hydrogen + (sulfur carrier)-SH + AH2 + 2 S-adenosyl-L-methionine = 3-methylsulfanyl-L-aspartate(89)-[ribosomal protein uS12]-hydrogen + (sulfur carrier)-H + 5'-deoxyadenosine + L-methionine + A + S-adenosyl-L-homocysteine + 2 H(+). In terms of biological role, catalyzes the methylthiolation of an aspartic acid residue of ribosomal protein uS12. The protein is Ribosomal protein uS12 methylthiotransferase RimO of Synechococcus sp. (strain RCC307).